The sequence spans 130 residues: 3-aminoacrylate deaminase RutC (130 aa).

It belongs to the RutC family.

It catalyses the reaction (Z)-3-aminoacrylate + H2O + H(+) = 3-oxopropanoate + NH4(+). Involved in pyrimidine catabolism. Catalyzes the deamination of 3-aminoacrylate to malonic semialdehyde, a reaction that can also occur spontaneously. RutC may facilitate the reaction and modulate the metabolic fitness, rather than catalyzing essential functions. This chain is 3-aminoacrylate deaminase RutC, found in Haliangium ochraceum (strain DSM 14365 / JCM 11303 / SMP-2).